Consider the following 545-residue polypeptide: Membrane protein insertase YidC (545 aa).

Helical transmembrane passes span I350–Y370, L424–V444, A461–L481, and P498–V518.

It belongs to the OXA1/ALB3/YidC family. Type 1 subfamily. Interacts with the Sec translocase complex via SecD. Specifically interacts with transmembrane segments of nascent integral membrane proteins during membrane integration.

It localises to the cell inner membrane. Functionally, required for the insertion and/or proper folding and/or complex formation of integral membrane proteins into the membrane. Involved in integration of membrane proteins that insert both dependently and independently of the Sec translocase complex, as well as at least some lipoproteins. Aids folding of multispanning membrane proteins. The polypeptide is Membrane protein insertase YidC (Neisseria meningitidis serogroup B (strain ATCC BAA-335 / MC58)).